A 130-amino-acid chain; its full sequence is Small ribosomal subunit protein uS8 (130 aa).

Belongs to the universal ribosomal protein uS8 family. In terms of assembly, component of the small ribosomal subunit (SSU). Mature N.crassa ribosomes consist of a small (40S) and a large (60S) subunit. The 40S small subunit contains 1 molecule of ribosomal RNA (18S rRNA) and at least 32 different proteins. The large 60S subunit contains 3 rRNA molecules (26S, 5.8S and 5S rRNA) and at least 42 different proteins.

It localises to the cytoplasm. Component of the ribosome, a large ribonucleoprotein complex responsible for the synthesis of proteins in the cell. The small ribosomal subunit (SSU) binds messenger RNAs (mRNAs) and translates the encoded message by selecting cognate aminoacyl-transfer RNA (tRNA) molecules. The large subunit (LSU) contains the ribosomal catalytic site termed the peptidyl transferase center (PTC), which catalyzes the formation of peptide bonds, thereby polymerizing the amino acids delivered by tRNAs into a polypeptide chain. The nascent polypeptides leave the ribosome through a tunnel in the LSU and interact with protein factors that function in enzymatic processing, targeting, and the membrane insertion of nascent chains at the exit of the ribosomal tunnel. The polypeptide is Small ribosomal subunit protein uS8 (crp-27) (Neurospora crassa (strain ATCC 24698 / 74-OR23-1A / CBS 708.71 / DSM 1257 / FGSC 987)).